Here is a 503-residue protein sequence, read N- to C-terminus: Cobyric acid synthase (503 aa).

Positions 245-447 (DISIAIIRLP…LHGIFDEISL (203 aa)) constitute a GATase cobBQ-type domain. Catalysis depends on Cys326, which acts as the Nucleophile. Residue His439 is part of the active site.

The protein belongs to the CobB/CobQ family. CobQ subfamily.

The protein operates within cofactor biosynthesis; adenosylcobalamin biosynthesis. Catalyzes amidations at positions B, D, E, and G on adenosylcobyrinic A,C-diamide. NH(2) groups are provided by glutamine, and one molecule of ATP is hydrogenolyzed for each amidation. The sequence is that of Cobyric acid synthase from Alkaliphilus metalliredigens (strain QYMF).